We begin with the raw amino-acid sequence, 164 residues long: UPF0304 protein YPDSF_1971 (164 aa).

The protein belongs to the UPF0304 family.

In Yersinia pestis (strain Pestoides F), this protein is UPF0304 protein YPDSF_1971.